Reading from the N-terminus, the 361-residue chain is Histidinol-phosphate aminotransferase (361 aa).

Lys-219 bears the N6-(pyridoxal phosphate)lysine mark.

This sequence belongs to the class-II pyridoxal-phosphate-dependent aminotransferase family. Histidinol-phosphate aminotransferase subfamily. As to quaternary structure, homodimer. The cofactor is pyridoxal 5'-phosphate.

It catalyses the reaction L-histidinol phosphate + 2-oxoglutarate = 3-(imidazol-4-yl)-2-oxopropyl phosphate + L-glutamate. Its pathway is amino-acid biosynthesis; L-histidine biosynthesis; L-histidine from 5-phospho-alpha-D-ribose 1-diphosphate: step 7/9. The sequence is that of Histidinol-phosphate aminotransferase from Cereibacter sphaeroides (strain ATCC 17023 / DSM 158 / JCM 6121 / CCUG 31486 / LMG 2827 / NBRC 12203 / NCIMB 8253 / ATH 2.4.1.) (Rhodobacter sphaeroides).